The following is a 2148-amino-acid chain: Polyketide synthase 1 (2148 aa).

The N-terminal acylcarrier protein transacylase domain (SAT) stretch occupies residues 19–261 (FIFGDQSSCN…TPLAVHAPYH (243 aa)). In terms of domain architecture, Ketosynthase family 3 (KS3) spans 394 to 829 (ESKIAIIGMS…GGNTALLVED (436 aa)). Catalysis depends on for beta-ketoacyl synthase activity residues C566, H701, and H745. The interval 929–1233 (AFVFSGQGSQ…PSLMRNKDGW (305 aa)) is malonyl-CoA:ACP transacylase (MAT) domain. S1018 serves as the catalytic For acyl/malonyl transferase activity. The segment at 1310-1624 (TASVHRIVHE…RKVLNTAMPP (315 aa)) is product template (PT) domain. The tract at residues 1314-1447 (HRIVHESVEK…SSLHFEQPKV (134 aa)) is N-terminal hotdog fold. The 306-residue stretch at 1314-1619 (HRIVHESVEK…FQGIPRKVLN (306 aa)) folds into the PKS/mFAS DH domain. The active-site Proton acceptor; for dehydratase activity is the H1346. The C-terminal hotdog fold stretch occupies residues 1474–1619 (LNSRMSSGVI…FQGIPRKVLN (146 aa)). D1533 acts as the Proton donor; for dehydratase activity in catalysis. The tract at residues 1619 to 1655 (NTAMPPPKSQNEAPVRSGPAKPAVKPPRSASSEHSGH) is disordered. One can recognise a Carrier 1 domain in the interval 1678–1752 (RNPMLPVFKI…DLAAHLGMDT (75 aa)). S1712 is modified (O-(pantetheine 4'-phosphoryl)serine). Residues 1755–1790 (ADQSSGQSSSSGGLSPRSDSIGEMTSSATTPPSMSP) are compositionally biased toward low complexity. Residues 1755-1796 (ADQSSGQSSSSGGLSPRSDSIGEMTSSATTPPSMSPRGSVSG) form a disordered region. The Carrier 2 domain maps to 1793–1870 (SVSGSQCKDV…SFKHMFQQGH (78 aa)). The residue at position 1830 (S1830) is an O-(pantetheine 4'-phosphoryl)serine. The interval 1882–2146 (LKQYRATSTL…ERVAAFIRSI (265 aa)) is thioesterase (TE) domain. S1973 (for thioesterase activity) is an active-site residue.

In terms of biological role, polyketide synthase; part of the Pks1 gene cluster that mediates the biosynthesis of an anthraquinone derivative pigment that contributes to conidial pigmentation that provides protection from UV radiation, heat and cold stress. The polyketide synthase Pks1 produces 1-acetyl-2,4,6,8-tetrahydroxy-9,10-anthraquinone though condensation of acetyl-CoA with malonyl-CoA. The dehydratase EthD and the laccase Mlac1 further convert the anthraquinone derivative into the final conidial pigment. In Metarhizium brunneum (strain ARSEF 3297), this protein is Polyketide synthase 1.